A 218-amino-acid polypeptide reads, in one-letter code: Glutathione S-transferase Y1 (218 aa).

The GST N-terminal domain occupies 2–88; the sequence is PMILGYWNVR…YIARKHNLCG (87 aa). Glutathione-binding positions include 7–8, 46–50, 59–60, and 72–73; these read YW, WLNEK, NL, and QS. The GST C-terminal domain occupies 90–208; it reads TEEERIRVDI…KTSRFLRRPI (119 aa). Tyr116 is a substrate binding site.

It belongs to the GST superfamily. Mu family. Homodimer.

The protein localises to the cytoplasm. It carries out the reaction RX + glutathione = an S-substituted glutathione + a halide anion + H(+). Functionally, conjugation of reduced glutathione to a wide number of exogenous and endogenous hydrophobic electrophiles. The polypeptide is Glutathione S-transferase Y1 (Cricetulus longicaudatus (Long-tailed dwarf hamster)).